The sequence spans 189 residues: Notch ligand osm-11 (189 aa).

A signal peptide spans 1–18 (MNFITVAALAIVMVLAQA).

In terms of assembly, may interact with lin-12/Notch receptor. In terms of tissue distribution, expressed in coelomocytes (at protein level).

It localises to the apical cell membrane. Probable secreted lin-12/Notch ligand or co-ligand involved in the mediation of Notch signaling. Involved in the lin-12/Notch pathway signaling of cell fate in vulval precursor cells (VPCs), acting redundantly with dsl-1 and lag-2. Required for normal octanol avoidance response, acting via both lin-12/Notch and glp-1/Notch signaling pathways in neurons, in concert with lag-2. Involved in regulation of sleep-like quiescence during the larval to adult transition, acting via Notch receptor activation and in parallel with EGF signaling. This Caenorhabditis elegans protein is Notch ligand osm-11.